The primary structure comprises 932 residues: Isoleucine--tRNA ligase (932 aa).

The 'HIGH' region signature appears at 58 to 68 (PYANGDIHIGH). L-isoleucyl-5'-AMP is bound at residue E570. The 'KMSKS' region motif lies at 611-615 (KMSKS). K614 lines the ATP pocket. Residues C895, C898, C915, and C918 each coordinate Zn(2+).

The protein belongs to the class-I aminoacyl-tRNA synthetase family. IleS type 1 subfamily. As to quaternary structure, monomer. Zn(2+) serves as cofactor.

It localises to the cytoplasm. The catalysed reaction is tRNA(Ile) + L-isoleucine + ATP = L-isoleucyl-tRNA(Ile) + AMP + diphosphate. Catalyzes the attachment of isoleucine to tRNA(Ile). As IleRS can inadvertently accommodate and process structurally similar amino acids such as valine, to avoid such errors it has two additional distinct tRNA(Ile)-dependent editing activities. One activity is designated as 'pretransfer' editing and involves the hydrolysis of activated Val-AMP. The other activity is designated 'posttransfer' editing and involves deacylation of mischarged Val-tRNA(Ile). In Dechloromonas aromatica (strain RCB), this protein is Isoleucine--tRNA ligase.